The sequence spans 1150 residues: Apomucin (1150 aa).

Low complexity-rich tracts occupy residues 1 to 36 and 46 to 79; these read ETAR…TGAS and SVAG…SSVG. A run of 5 repeats spans residues 1–44, 45–125, 126–206, 207–287, and 288–368. The 6 X 81 AA tandem repeats stretch occupies residues 1–368; it reads ETARPSVAGS…ASIGQPETSR (368 aa). Disordered stretches follow at residues 1-730 and 776-925; these read ETAR…KTGI and APGS…PAPL. O-linked (GalNAc...) serine; partial glycosylation is found at Ser46, Ser50, Ser51, Ser57, Ser58, and Ser61. O-linked (GalNAc...) threonine; partial glycosylation is present at Thr66. Ser67 carries O-linked (GalNAc...) serine; partial glycosylation. Residues Thr73 and Thr74 are each glycosylated (O-linked (GalNAc...) threonine; partial). Residues Ser76 and Ser77 are each glycosylated (O-linked (GalNAc...) serine; partial). Residues Thr81 and Thr83 are each glycosylated (O-linked (GalNAc...) threonine; partial). The segment covering 86–117 has biased composition (low complexity); it reads PSVAGSGTTGTVSGASGSTGSSSGSPGATGAS. Residues Ser87 and Ser91 are each glycosylated (O-linked (GalNAc...) serine; partial). 3 O-linked (GalNAc...) threonine; partial glycosylation sites follow: Thr93, Thr94, and Thr96. Residues Ser98, Ser101, and Ser103 are each glycosylated (O-linked (GalNAc...) serine; partial). O-linked (GalNAc...) threonine; partial glycosylation is present at Thr104. 4 O-linked (GalNAc...) serine; partial glycosylation sites follow: Ser106, Ser107, Ser108, and Ser110. Thr114 carries O-linked (GalNAc...) threonine; partial glycosylation. Ser117 is a glycosylation site (O-linked (GalNAc...) serine; partial). The O-linked (GalNAc...) threonine; partial glycan is linked to Thr123. Ser124 carries O-linked (GalNAc...) serine; partial glycosylation. 7 stretches are compositionally biased toward low complexity: residues 127-160, 167-198, 208-241, 248-279, 289-322, 329-360, and 370-396; these read SVAG…SSVG, PSVA…TGAS, and SVAG…ATTS. The 6; truncated repeat unit spans residues 369 to 391; sequence ISVAGSSGAPAVSSGASQAAGTS. An N-linked (GlcNAc...) asparagine glycan is attached at Asn418. The span at 442 to 459 shows a compositional bias: polar residues; sequence SYNTEATTSIGRSGTTHT. The segment covering 473-506 has biased composition (low complexity); it reads SHSSQSSKPGSSVTTPGSPESGSETGTSGEFSTT. 2 stretches are compositionally biased toward polar residues: residues 507 to 517 and 537 to 547; these read VISGSSHTEAT and ELSGTTIASGN. The N-linked (GlcNAc...) asparagine glycan is linked to Asn547. The segment covering 548-558 has biased composition (low complexity); it reads ATTEATTSTET. A compositionally biased stretch (polar residues) spans 564-586; it reads TGAQTTVPGSQVSGSETGTSEAV. Low complexity predominate over residues 590–625; that stretch reads AIASGSSSTGTTSGASDSQVTGSRTGTTGVVLGTTV. Composition is skewed to polar residues over residues 626–635 and 643–661; these read APGSSSTGAT and GTRS…TTYE. A compositionally biased stretch (gly residues) spans 671–682; that stretch reads GGSGTPGSGINT. 3 stretches are compositionally biased toward polar residues: residues 688–697, 706–729, and 779–788; these read QVTGIQTGTT, LPGS…SKTG, and SFNTKATTPT. The span at 790–833 shows a compositional bias: low complexity; the sequence is VRAATGAGTAVGATSRSTGISTGPENSTPGTTETGSGTTSSPGG. The span at 875 to 908 shows a compositional bias: polar residues; it reads ETTTAPRISATGSTSVSKEITASPKVSSPETTAG. N-linked (GlcNAc...) asparagine glycans are attached at residues Asn917, Asn985, Asn1002, and Asn1068. The 67-residue stretch at 929–995 folds into the VWFC domain; the sequence is PVCHGPLGEE…DTCCEIGHCE (67 aa). 4 disulfides stabilise this stretch: Cys1062-Cys1109, Cys1076-Cys1123, Cys1085-Cys1139, and Cys1089-Cys1141. A CTCK domain is found at 1062-1146; it reads CKPSPVNVTV…TACSCLDPCQ (85 aa).

In terms of assembly, intermolecular disulfide bonds could help maintain a multimeric mucin structure. In terms of processing, extensively O-glycosylated on most but not all Ser and Thr residues of the repeat units. Highest glycosylation appears to occur on Ser residues which have Gly at positions at +2 or -2 from the glycosylation site or, where Gly is the penultimate residue. The presence of proline (usually at position +3 or -3) appears to also enhance glycosylation. Submaxillary mucosae.

It localises to the secreted. Apomucin is part of mucin, the major glycoprotein synthesized and secreted by mucous cells of the submaxillary gland. Its highly viscous aqueous solutions serve to lubricate the oral cavity and to protect it from the external environment. This Sus scrofa (Pig) protein is Apomucin.